Consider the following 389-residue polypeptide: 5-hydroxytryptamine receptor 1B (389 aa).

Residues 1–27 (MEAAGAPCAPPPPAGSQTGAPPANLSS) are disordered. Topologically, residues 1 to 45 (MEAAGAPCAPPPPAGSQTGAPPANLSSAPHNCSAEGYIYQDSVAL) are extracellular. Positions 16–27 (SQTGAPPANLSS) are enriched in polar residues. N-linked (GlcNAc...) asparagine glycosylation is found at Asn24 and Asn31. A helical transmembrane segment spans residues 46–71 (PWKVLLVILLALITLATTLSNAFVIA). The Cytoplasmic segment spans residues 72–85 (TVYRTRKLHTPANY). A helical transmembrane segment spans residues 86–110 (LIASLAVTDLLVSILVMPISTMYTV). Residues 111-118 (TGRWTLGQ) lie on the Extracellular side of the membrane. Residues 119–144 (VVCDLWLSSDITCCTASILHLCVIAL) form a helical membrane-spanning segment. Cys121 and Cys198 are oxidised to a cystine. Asp128 and Thr133 together coordinate ergotamine. Positions 145 to 147 (DRY) match the DRY motif; important for ligand-induced conformation changes and signaling motif. Residues 145 to 164 (DRYWAITDAVEYSAKRTPKR) are Cytoplasmic-facing. A helical transmembrane segment spans residues 165-183 (AAVMIALVWVFSISISLPP). Topologically, residues 184–204 (FFWRQAKAEEEVSDCVVNTDH) are extracellular. Val200 is a binding site for ergotamine. Residues 205 to 228 (ILYTVYSTVGAFYFPTLLLIALYG) form a helical membrane-spanning segment. Residues 229–314 (RIYVEARSRI…AARERKATKT (86 aa)) are Cytoplasmic-facing. Positions 258–271 (DSPGSTSSVTSVNS) are enriched in polar residues. Positions 258–281 (DSPGSTSSVTSVNSRAPDVPSESG) are disordered. The helical transmembrane segment at 315-336 (LGIILGAFIVCWLPFFIISLVM) threads the bilayer. At 337-346 (PICKDACWFH) the chain is on the extracellular side. The helical transmembrane segment at 347–369 (LAIFDFFTWLGYLNSLINPIIYT) threads the bilayer. The NPxxY motif; important for ligand-induced conformation changes and signaling signature appears at 364-368 (NPIIY). The Cytoplasmic portion of the chain corresponds to 370–389 (MSNEDFKQAFHKLIRFKCAG). The S-palmitoyl cysteine moiety is linked to residue Cys387.

Belongs to the G-protein coupled receptor 1 family. Homodimer. Heterodimer with HTR1D. Post-translationally, phosphorylated. Desensitization of the receptor may be mediated by its phosphorylation. Palmitoylated.

It is found in the cell membrane. G-protein coupled receptor for 5-hydroxytryptamine (serotonin). Also functions as a receptor for ergot alkaloid derivatives, various anxiolytic and antidepressant drugs and other psychoactive substances, such as lysergic acid diethylamide (LSD). Ligand binding causes a conformation change that triggers signaling via guanine nucleotide-binding proteins (G proteins) and modulates the activity of downstream effectors, such as adenylate cyclase. HTR1B is coupled to G(i)/G(o) G alpha proteins and mediates inhibitory neurotransmission by inhibiting adenylate cyclase activity. Arrestin family members inhibit signaling via G proteins and mediate activation of alternative signaling pathways. Regulates the release of 5-hydroxytryptamine, dopamine and acetylcholine in the brain, and thereby affects neural activity, nociceptive processing, pain perception, mood and behavior. Besides, plays a role in vasoconstriction of cerebral arteries. The polypeptide is 5-hydroxytryptamine receptor 1B (HTR1B) (Canis lupus familiaris (Dog)).